An 878-amino-acid polypeptide reads, in one-letter code: MTSDRYNARDAEPRWQAAWDQQAIFATKNDDPREKYYVLEMFPYPSGRIHIGHVRNYTLGDVIARYMRAKGYNVLHPMGWDAFGLPAENAAIERKVAPKAWTYDNIKAMKKQLRSIGLSLDWAREFATCDPSYYKHQQKMFLDFLRAGLAEREKRKINWDPVDMTVLANEQVIDGRGWRSGAVVEQREMNQWVFKITKYSQELLEALDTLDRWPDKVRLMQRNWIGRSEGLLLRFALDPATTPNGEGELKIFTTRPDTLFGAKFMAIAPDHPLAQAAAKDNPALAEFIAECKRRGTAQAEIDTAEKMGFDTGIRAIHPFDPDWTLPVYVANFILMEYGTGAIFGCPAHDQRDLDFVNKYGLGNTPVVCPEGQDPKTLVITDTAYDGDGRMINSRFLDGMTAEAAKKEVAKRLESEMRGNMPVGERKVNFRLRDWGISRQRYWGCPIPVIHCPKCDVVPVPENDLPVTLPEDVTFDKPGNALDHHPTWKHVTCPQCGARATRETDTMDTFVDSSWYFARFTDPWNETAPTTPEIANRMMPVDQYIGGVEHAILHLLYSRFFTRAMKATGHLSMDEPFKGMFTQGMVVHETYRKADGGWASPDEVGIEAVGNGRRATLISTGEPVEIGAVEKMSKSKRNTVDPDDIIGSYGADTARWFMLSDSPPDRDVIWSEEGVQGASRFMQRLWRLVNESAEAGKAAPRDKPATFGTDALALRKAAHGALDKVSTGIERLHFNVCLANIREFANTLAETLARFGTRTSDLAPDIAWSLREAATILVQLFSPMMPHLSEECWHALGHTGLVSEARWPQIERDLLVEDTVTLPVQVNGKKRGEVTVASSAPNPEIETAVLALDAVRQALGGKPARKIIIVPQRIVNVVG.

Residues 43 to 53 carry the 'HIGH' region motif; sequence PYPSGRIHIGH. Positions 630 to 634 match the 'KMSKS' region motif; it reads KMSKS. Position 633 (lysine 633) interacts with ATP.

The protein belongs to the class-I aminoacyl-tRNA synthetase family.

The protein resides in the cytoplasm. The enzyme catalyses tRNA(Leu) + L-leucine + ATP = L-leucyl-tRNA(Leu) + AMP + diphosphate. The chain is Leucine--tRNA ligase from Nitrobacter hamburgensis (strain DSM 10229 / NCIMB 13809 / X14).